The following is a 238-amino-acid chain: Orotidine 5'-phosphate decarboxylase (238 aa).

Substrate is bound by residues Asp18, Lys40, 67–76, Thr122, Arg183, Gln192, and Arg213; that span reads DMKLLDIDNT. The Proton donor role is filled by Lys69.

The protein belongs to the OMP decarboxylase family. Type 1 subfamily. Homodimer.

It catalyses the reaction orotidine 5'-phosphate + H(+) = UMP + CO2. Its pathway is pyrimidine metabolism; UMP biosynthesis via de novo pathway; UMP from orotate: step 2/2. In terms of biological role, catalyzes the decarboxylation of orotidine 5'-monophosphate (OMP) to uridine 5'-monophosphate (UMP). The protein is Orotidine 5'-phosphate decarboxylase of Brucella canis (strain ATCC 23365 / NCTC 10854 / RM-666).